Consider the following 542-residue polypeptide: Carboxypeptidase Y homolog A (542 aa).

The first 17 residues, 1-17, serve as a signal peptide directing secretion; the sequence is MRVLPATLLVGAASAAV. The propeptide occupies 18-123; the sequence is PPLQQVLGRP…KLEAYDLRIK (106 aa). 5 disulfide bridges follow: cysteine 178/cysteine 418, cysteine 312/cysteine 326, cysteine 336/cysteine 359, cysteine 343/cysteine 352, and cysteine 381/cysteine 388. The N-linked (GlcNAc...) asparagine glycan is linked to asparagine 209. Residue serine 265 is part of the active site. Residue aspartate 457 is part of the active site. N-linked (GlcNAc...) asparagine glycosylation is present at asparagine 508. Residue histidine 519 is part of the active site.

The protein belongs to the peptidase S10 family.

It is found in the vacuole. The catalysed reaction is Release of a C-terminal amino acid with broad specificity.. Its function is as follows. Vacuolar carboxypeptidase involved in degradation of small peptides. Digests preferentially peptides containing an aliphatic or hydrophobic residue in P1' position, as well as methionine, leucine or phenylalanine in P1 position of ester substrate. The polypeptide is Carboxypeptidase Y homolog A (cpyA) (Aspergillus oryzae (strain ATCC 42149 / RIB 40) (Yellow koji mold)).